The sequence spans 116 residues: Large ribosomal subunit protein bL19 (116 aa).

This sequence belongs to the bacterial ribosomal protein bL19 family.

Functionally, this protein is located at the 30S-50S ribosomal subunit interface and may play a role in the structure and function of the aminoacyl-tRNA binding site. The protein is Large ribosomal subunit protein bL19 of Staphylococcus epidermidis (strain ATCC 35984 / DSM 28319 / BCRC 17069 / CCUG 31568 / BM 3577 / RP62A).